Consider the following 244-residue polypeptide: Glutathione-independent glyoxalase hsp3101 (244 aa).

Residues Cys-139, His-140, and Glu-173 contribute to the active site.

The protein belongs to the peptidase C56 family. HSP31-like subfamily.

The protein localises to the cytoplasm. The protein resides in the nucleus. It carries out the reaction methylglyoxal + H2O = (R)-lactate + H(+). Functionally, catalyzes the conversion of methylglyoxal (MG) to D-lactate in a single glutathione (GSH)-independent step. May play a role in detoxifying endogenously produced glyoxals. Involved in protection against reactive oxygen species (ROS). In Schizosaccharomyces pombe (strain 972 / ATCC 24843) (Fission yeast), this protein is Glutathione-independent glyoxalase hsp3101.